A 145-amino-acid polypeptide reads, in one-letter code: Large ribosomal subunit protein uL11 (145 aa).

This sequence belongs to the universal ribosomal protein uL11 family. Part of the ribosomal stalk of the 50S ribosomal subunit. Interacts with L10 and the large rRNA to form the base of the stalk. L10 forms an elongated spine to which L12 dimers bind in a sequential fashion forming a multimeric L10(L12)X complex. Post-translationally, one or more lysine residues are methylated.

Its function is as follows. Forms part of the ribosomal stalk which helps the ribosome interact with GTP-bound translation factors. This is Large ribosomal subunit protein uL11 from Rickettsia africae (strain ESF-5).